A 20-amino-acid polypeptide reads, in one-letter code: DFKCPSEWYAYDQHCYRIIN.

Cysteine 4 and cysteine 15 are disulfide-bonded. The 10-residue stretch at 11–20 (YDQHCYRIIN) folds into the C-type lectin domain.

It belongs to the snaclec family. As to quaternary structure, heterodimer of subunits alpha and beta; disulfide-linked. In terms of tissue distribution, expressed by the venom gland.

It localises to the secreted. Functionally, binds to the platelet and collagen receptor glycoprotein VI (GP6) and activates platelet aggregation. This Ophiophagus hannah (King cobra) protein is Snaclec ophioluxin subunit alpha.